The following is a 523-amino-acid chain: Putative glycerol-3-phosphate transporter 1 (523 aa).

A run of 12 helical transmembrane segments spans residues 29 to 49 (LSYS…YASY), 102 to 122 (VLLG…MYFA), 133 to 153 (IFLT…GVGY), 163 to 183 (FLIM…SVVA), 196 to 216 (LIMG…SLIA), 228 to 248 (FVVP…FLPV), 306 to 326 (FALC…WLPF), 344 to 364 (GNLS…AGYI), 368 to 388 (IGAR…ALFF), 402 to 422 (SLMF…TTAV), 444 to 464 (AIID…TGYI), and 468 to 488 (GSWT…GLLL).

It belongs to the major facilitator superfamily. Organophosphate:Pi antiporter (OPA) (TC 2.A.1.4) family.

It is found in the membrane. The sequence is that of Putative glycerol-3-phosphate transporter 1 from Arabidopsis thaliana (Mouse-ear cress).